The following is a 346-amino-acid chain: N-acetyl-gamma-glutamyl-phosphate reductase (346 aa).

Cys-149 is an active-site residue.

This sequence belongs to the NAGSA dehydrogenase family. Type 1 subfamily.

The protein localises to the cytoplasm. It carries out the reaction N-acetyl-L-glutamate 5-semialdehyde + phosphate + NADP(+) = N-acetyl-L-glutamyl 5-phosphate + NADPH + H(+). It functions in the pathway amino-acid biosynthesis; L-arginine biosynthesis; N(2)-acetyl-L-ornithine from L-glutamate: step 3/4. Its function is as follows. Catalyzes the NADPH-dependent reduction of N-acetyl-5-glutamyl phosphate to yield N-acetyl-L-glutamate 5-semialdehyde. This chain is N-acetyl-gamma-glutamyl-phosphate reductase, found in Saccharophagus degradans (strain 2-40 / ATCC 43961 / DSM 17024).